We begin with the raw amino-acid sequence, 700 residues long: Elongation factor G 1 (700 aa).

One can recognise a tr-type G domain in the interval glutamate 8–alanine 290. GTP contacts are provided by residues alanine 17–threonine 24, aspartate 88–histidine 92, and asparagine 142–aspartate 145.

This sequence belongs to the TRAFAC class translation factor GTPase superfamily. Classic translation factor GTPase family. EF-G/EF-2 subfamily.

The protein resides in the cytoplasm. Catalyzes the GTP-dependent ribosomal translocation step during translation elongation. During this step, the ribosome changes from the pre-translocational (PRE) to the post-translocational (POST) state as the newly formed A-site-bound peptidyl-tRNA and P-site-bound deacylated tRNA move to the P and E sites, respectively. Catalyzes the coordinated movement of the two tRNA molecules, the mRNA and conformational changes in the ribosome. The sequence is that of Elongation factor G 1 from Bordetella parapertussis (strain 12822 / ATCC BAA-587 / NCTC 13253).